The sequence spans 171 residues: NADP-reducing hydrogenase subunit HndA (171 aa).

Residues C98, C103, C139, and C143 each coordinate [2Fe-2S] cluster.

It belongs to the complex I 24 kDa subunit family. As to quaternary structure, heterotetramer composed of HndA, HndB, HndC and HndD subunits. HndA and HndB could form a heterodimeric intermediate in the electron transfer between the active site of hydrogenase subunit HndD and the NADP reduction site of the reducing subunit HndC. [2Fe-2S] cluster is required as a cofactor.

It catalyses the reaction H2 + NADP(+) = NADPH + H(+). Its activity is regulated as follows. Inhibited by oxygen. Its function is as follows. Catalyzes the reduction of NADP in the presence of molecular H(2) to yield NADPH. This Solidesulfovibrio fructosivorans (Desulfovibrio fructosivorans) protein is NADP-reducing hydrogenase subunit HndA (hndA).